Here is a 656-residue protein sequence, read N- to C-terminus: Receptor-type tyrosine-protein phosphatase R (656 aa).

The signal sequence occupies residues 1 to 23 (MRRAVGFPALCLLLNLHAAGCFS). An O-linked (Xyl...) (chondroitin sulfate) serine glycan is attached at Ser23. The Extracellular segment spans residues 24–226 (RNNDHFLAIR…EADKIWSKEG (203 aa)). Residue Asn128 is glycosylated (N-linked (GlcNAc...) asparagine). A helical membrane pass occupies residues 227–247 (FYAVVIFLSIFIIIVTCLMII). Over 248-656 (YRLKERLQLS…ESRLSPETVE (409 aa)) the chain is Cytoplasmic. The tract at residues 269–289 (HLSPIARQQAQSEAKTTHSMV) is disordered. Residue Ser271 is modified to Phosphoserine. Residues 274–289 (ARQQAQSEAKTTHSMV) are compositionally biased toward polar residues. Ser338 carries the phosphoserine; by PKA modification. The Tyrosine-protein phosphatase domain occupies 392 to 646 (LQSEFMEIPM…EFVHHALCLF (255 aa)). Substrate is bound by residues Asp553, 587-593 (CSAGIGR), and Gln631. The active-site Phosphocysteine intermediate is the Cys587.

The protein belongs to the protein-tyrosine phosphatase family. Receptor class 7 subfamily. Interacts with MAPKs. In terms of tissue distribution, expressed in the heart, brain, spleen, lung, liver, skeletal muscle, kidney and testis. Isoform alpha is expressed throughout the granular layer of the cerebellar but not within the Purkinje cells, also in the villi of the ileum and jejunum and both the villi and crypts of the duodenum. Isoform beta is expressed only in the Purkinje cells. Isoform gamma is expressed throughout the brain, the villi and crypts of the duodenum, jejunum and ileum and expressed at low levels in the proximal colon.

It is found in the cell membrane. It localises to the cytoplasm. It carries out the reaction O-phospho-L-tyrosyl-[protein] + H2O = L-tyrosyl-[protein] + phosphate. Its function is as follows. Sequesters mitogen-activated protein kinases (MAPKs) such as MAPK1, MAPK3 and MAPK14 in the cytoplasm in an inactive form. The MAPKs bind to a dephosphorylated kinase interacting motif, phosphorylation of which by the protein kinase A complex releases the MAPKs for activation and translocation into the nucleus. Isoform gamma may have a role in patterning and cellular proliferation of skeletal elements in the precartilaginous/cartilaginous skeleton. This Mus musculus (Mouse) protein is Receptor-type tyrosine-protein phosphatase R (Ptprr).